We begin with the raw amino-acid sequence, 174 residues long: Urease accessory protein UreE (174 aa).

This sequence belongs to the UreE family.

The protein localises to the cytoplasm. Involved in urease metallocenter assembly. Binds nickel. Probably functions as a nickel donor during metallocenter assembly. In Helicobacter hepaticus (strain ATCC 51449 / 3B1), this protein is Urease accessory protein UreE.